A 132-amino-acid chain; its full sequence is Small ribosomal subunit protein uS8 (132 aa).

Belongs to the universal ribosomal protein uS8 family. In terms of assembly, part of the 30S ribosomal subunit. Contacts proteins S5 and S12.

In terms of biological role, one of the primary rRNA binding proteins, it binds directly to 16S rRNA central domain where it helps coordinate assembly of the platform of the 30S subunit. In Latilactobacillus sakei subsp. sakei (strain 23K) (Lactobacillus sakei subsp. sakei), this protein is Small ribosomal subunit protein uS8.